Reading from the N-terminus, the 101-residue chain is Small ribosomal subunit protein uS14 (101 aa).

The protein belongs to the universal ribosomal protein uS14 family. Part of the 30S ribosomal subunit. Contacts proteins S3 and S10.

Its function is as follows. Binds 16S rRNA, required for the assembly of 30S particles and may also be responsible for determining the conformation of the 16S rRNA at the A site. In Salmonella schwarzengrund (strain CVM19633), this protein is Small ribosomal subunit protein uS14.